Here is a 270-residue protein sequence, read N- to C-terminus: uncharacterized protein (270 aa).

Residues 166-186 (RRKENNISNESVSEEPESPLF) are disordered.

This is an uncharacterized protein from Ostreid herpesvirus 1 (isolate France) (OsHV-1).